The primary structure comprises 289 residues: ATP synthase gamma chain (289 aa).

This sequence belongs to the ATPase gamma chain family. In terms of assembly, F-type ATPases have 2 components, CF(1) - the catalytic core - and CF(0) - the membrane proton channel. CF(1) has five subunits: alpha(3), beta(3), gamma(1), delta(1), epsilon(1). CF(0) has three main subunits: a, b and c.

Its subcellular location is the cell membrane. In terms of biological role, produces ATP from ADP in the presence of a proton gradient across the membrane. The gamma chain is believed to be important in regulating ATPase activity and the flow of protons through the CF(0) complex. The polypeptide is ATP synthase gamma chain (Buchnera aphidicola subsp. Melaphis rhois).